A 47-amino-acid polypeptide reads, in one-letter code: MAKGKRTFQPNNRRRARVHGFRLRMRTRAGRAIVSGRRRKGRRALSA.

This sequence belongs to the bacterial ribosomal protein bL34 family.

This Mycobacterium avium (strain 104) protein is Large ribosomal subunit protein bL34.